The following is a 625-amino-acid chain: DNA mismatch repair protein MutL (625 aa).

The protein belongs to the DNA mismatch repair MutL/HexB family.

Its function is as follows. This protein is involved in the repair of mismatches in DNA. It is required for dam-dependent methyl-directed DNA mismatch repair. May act as a 'molecular matchmaker', a protein that promotes the formation of a stable complex between two or more DNA-binding proteins in an ATP-dependent manner without itself being part of a final effector complex. This chain is DNA mismatch repair protein MutL, found in Azorhizobium caulinodans (strain ATCC 43989 / DSM 5975 / JCM 20966 / LMG 6465 / NBRC 14845 / NCIMB 13405 / ORS 571).